A 396-amino-acid chain; its full sequence is Phosphoglycerate kinase (396 aa).

Substrate contacts are provided by residues D21 to N23, R36, H59 to K62, R119, and R156. ATP is bound by residues K206, E325, and G352–S355.

This sequence belongs to the phosphoglycerate kinase family. Monomer.

The protein localises to the cytoplasm. It carries out the reaction (2R)-3-phosphoglycerate + ATP = (2R)-3-phospho-glyceroyl phosphate + ADP. It participates in carbohydrate degradation; glycolysis; pyruvate from D-glyceraldehyde 3-phosphate: step 2/5. This chain is Phosphoglycerate kinase, found in Staphylococcus carnosus (strain TM300).